We begin with the raw amino-acid sequence, 238 residues long: DNA repair protein RecO (238 aa).

It belongs to the RecO family.

Involved in DNA repair and RecF pathway recombination. The sequence is that of DNA repair protein RecO from Aliivibrio salmonicida (strain LFI1238) (Vibrio salmonicida (strain LFI1238)).